A 436-amino-acid polypeptide reads, in one-letter code: tRNA(Ile)-lysidine synthase (436 aa).

Residue 27–32 (SGGVDS) participates in ATP binding.

It belongs to the tRNA(Ile)-lysidine synthase family.

The protein resides in the cytoplasm. The catalysed reaction is cytidine(34) in tRNA(Ile2) + L-lysine + ATP = lysidine(34) in tRNA(Ile2) + AMP + diphosphate + H(+). Functionally, ligates lysine onto the cytidine present at position 34 of the AUA codon-specific tRNA(Ile) that contains the anticodon CAU, in an ATP-dependent manner. Cytidine is converted to lysidine, thus changing the amino acid specificity of the tRNA from methionine to isoleucine. This is tRNA(Ile)-lysidine synthase from Vibrio vulnificus (strain YJ016).